We begin with the raw amino-acid sequence, 220 residues long: Uracil-DNA glycosylase (220 aa).

The active-site Proton acceptor is the Asp60.

The protein belongs to the uracil-DNA glycosylase (UDG) superfamily. UNG family.

It is found in the cytoplasm. It catalyses the reaction Hydrolyzes single-stranded DNA or mismatched double-stranded DNA and polynucleotides, releasing free uracil.. In terms of biological role, excises uracil residues from the DNA which can arise as a result of misincorporation of dUMP residues by DNA polymerase or due to deamination of cytosine. In Francisella tularensis subsp. tularensis (strain FSC 198), this protein is Uracil-DNA glycosylase.